A 1368-amino-acid polypeptide reads, in one-letter code: DNA-directed RNA polymerase subunit beta (1368 aa).

This sequence belongs to the RNA polymerase beta chain family. The RNAP catalytic core consists of 2 alpha, 1 beta, 1 beta' and 1 omega subunit. When a sigma factor is associated with the core the holoenzyme is formed, which can initiate transcription.

The enzyme catalyses RNA(n) + a ribonucleoside 5'-triphosphate = RNA(n+1) + diphosphate. DNA-dependent RNA polymerase catalyzes the transcription of DNA into RNA using the four ribonucleoside triphosphates as substrates. In Paraburkholderia xenovorans (strain LB400), this protein is DNA-directed RNA polymerase subunit beta.